A 335-amino-acid polypeptide reads, in one-letter code: Glyceraldehyde-3-phosphate dehydrogenase 2 (335 aa).

Residues Arg13–Ile14, Asp35, and Arg80 contribute to the NAD(+) site. 2 positions are modified to phosphoserine: Ser125 and Ser151. Ser151–Thr153 contributes to the D-glyceraldehyde 3-phosphate binding site. Cys152 (nucleophile) is an active-site residue. Thr153, Thr154, Thr182, and Thr184 each carry phosphothreonine. Residue Thr182 participates in D-glyceraldehyde 3-phosphate binding. A phosphoserine mark is found at Ser192, Ser203, and Ser209. Residue Thr211 is modified to Phosphothreonine. D-glyceraldehyde 3-phosphate-binding positions include Thr211–Gly212 and Arg234. Residue Thr237 is modified to Phosphothreonine. Ser241 carries the post-translational modification Phosphoserine. Position 316 (Asn316) interacts with NAD(+).

The protein belongs to the glyceraldehyde-3-phosphate dehydrogenase family. In terms of assembly, homotetramer.

It is found in the cytoplasm. It catalyses the reaction D-glyceraldehyde 3-phosphate + phosphate + NAD(+) = (2R)-3-phospho-glyceroyl phosphate + NADH + H(+). The protein operates within carbohydrate degradation; glycolysis; pyruvate from D-glyceraldehyde 3-phosphate: step 1/5. The chain is Glyceraldehyde-3-phosphate dehydrogenase 2 (gpd3) from Schizosaccharomyces pombe (strain 972 / ATCC 24843) (Fission yeast).